We begin with the raw amino-acid sequence, 355 residues long: Protein RecA (355 aa).

67–74 (GPESSGKT) is a binding site for ATP.

The protein belongs to the RecA family.

Its subcellular location is the cytoplasm. Its function is as follows. Can catalyze the hydrolysis of ATP in the presence of single-stranded DNA, the ATP-dependent uptake of single-stranded DNA by duplex DNA, and the ATP-dependent hybridization of homologous single-stranded DNAs. It interacts with LexA causing its activation and leading to its autocatalytic cleavage. The sequence is that of Protein RecA from Shewanella baltica (strain OS223).